A 250-amino-acid chain; its full sequence is 3-deoxy-manno-octulosonate cytidylyltransferase (250 aa).

It belongs to the KdsB family.

It localises to the cytoplasm. It catalyses the reaction 3-deoxy-alpha-D-manno-oct-2-ulosonate + CTP = CMP-3-deoxy-beta-D-manno-octulosonate + diphosphate. It functions in the pathway nucleotide-sugar biosynthesis; CMP-3-deoxy-D-manno-octulosonate biosynthesis; CMP-3-deoxy-D-manno-octulosonate from 3-deoxy-D-manno-octulosonate and CTP: step 1/1. It participates in bacterial outer membrane biogenesis; lipopolysaccharide biosynthesis. In terms of biological role, activates KDO (a required 8-carbon sugar) for incorporation into bacterial lipopolysaccharide in Gram-negative bacteria. The polypeptide is 3-deoxy-manno-octulosonate cytidylyltransferase (Pectobacterium atrosepticum (strain SCRI 1043 / ATCC BAA-672) (Erwinia carotovora subsp. atroseptica)).